A 222-amino-acid polypeptide reads, in one-letter code: 26S proteasome non-ATPase regulatory subunit 9 (222 aa).

The PDZ domain maps to 108-194; sequence QARDMAEARE…KPLNVMVIRR (87 aa). Phosphoserine is present on S128.

It belongs to the proteasome subunit p27 family. Interacts with PSMC3. Part of a transient complex (modulator) containing PSMD9, PSMC6 and PSMC3 formed during the assembly of the 26S proteasome.

Its function is as follows. Acts as a chaperone during the assembly of the 26S proteasome, specifically of the base subcomplex of the PA700/19S regulatory complex (RC). During the base subcomplex assembly is part of an intermediate PSMD9:PSMC6:PSMC3 module, also known as modulator trimer complex; PSMD9 is released during the further base assembly process. The polypeptide is 26S proteasome non-ATPase regulatory subunit 9 (Psmd9) (Rattus norvegicus (Rat)).